The sequence spans 340 residues: Dihydroorotase (340 aa).

Zn(2+) is bound by residues H14 and H16. Substrate is bound by residues 16-18 (HLR) and N42. The Zn(2+) site is built by K100, H137, and H175. K100 bears the N6-carboxylysine mark. Residue H137 coordinates substrate. L220 provides a ligand contact to substrate. D248 serves as a coordination point for Zn(2+). D248 is a catalytic residue. 2 residues coordinate substrate: H252 and A264.

It belongs to the metallo-dependent hydrolases superfamily. DHOase family. Class II DHOase subfamily. Homodimer. Zn(2+) is required as a cofactor.

The catalysed reaction is (S)-dihydroorotate + H2O = N-carbamoyl-L-aspartate + H(+). Its pathway is pyrimidine metabolism; UMP biosynthesis via de novo pathway; (S)-dihydroorotate from bicarbonate: step 3/3. In terms of biological role, catalyzes the reversible cyclization of carbamoyl aspartate to dihydroorotate. In Sphingopyxis alaskensis (strain DSM 13593 / LMG 18877 / RB2256) (Sphingomonas alaskensis), this protein is Dihydroorotase.